A 252-amino-acid polypeptide reads, in one-letter code: Small ribosomal subunit protein uS3 (252 aa).

Residues 39–110 (IRKALMKELK…EVKINVVEIK (72 aa)) form the KH type-2 domain. The tract at residues 218–252 (TSDEKPKFEKRDFNRSNNNRRDQAPKSHPVAKEAK) is disordered. A compositionally biased stretch (basic and acidic residues) spans 219–252 (SDEKPKFEKRDFNRSNNNRRDQAPKSHPVAKEAK).

It belongs to the universal ribosomal protein uS3 family. As to quaternary structure, part of the 30S ribosomal subunit. Forms a tight complex with proteins S10 and S14.

Binds the lower part of the 30S subunit head. Binds mRNA in the 70S ribosome, positioning it for translation. This is Small ribosomal subunit protein uS3 from Spiroplasma citri.